Consider the following 23-residue polypeptide: ENFAGGCATGYLRTADGRCKPTF.

An intrachain disulfide couples C7 to C19.

Belongs to the GBP/PSP1/paralytic peptide family. As to expression, hemolymph.

Functionally, causes rapid, rigid paralysis when injected into Lepidopteran larvae. The physiological role may be to reduce hemolymph loss following injury and promote wound healing. The chain is Paralytic peptide 1 from Manduca sexta (Tobacco hawkmoth).